A 940-amino-acid polypeptide reads, in one-letter code: Isoleucine--tRNA ligase (940 aa).

A 'HIGH' region motif is present at residues 58–68; it reads PYANGSIHIGH. L-isoleucyl-5'-AMP is bound at residue E564. The 'KMSKS' region motif lies at 605–609; the sequence is KMSKS. An ATP-binding site is contributed by K608. Zn(2+) is bound by residues C903, C906, C923, and C926.

Belongs to the class-I aminoacyl-tRNA synthetase family. IleS type 1 subfamily. As to quaternary structure, monomer. It depends on Zn(2+) as a cofactor.

The protein resides in the cytoplasm. The enzyme catalyses tRNA(Ile) + L-isoleucine + ATP = L-isoleucyl-tRNA(Ile) + AMP + diphosphate. Functionally, catalyzes the attachment of isoleucine to tRNA(Ile). As IleRS can inadvertently accommodate and process structurally similar amino acids such as valine, to avoid such errors it has two additional distinct tRNA(Ile)-dependent editing activities. One activity is designated as 'pretransfer' editing and involves the hydrolysis of activated Val-AMP. The other activity is designated 'posttransfer' editing and involves deacylation of mischarged Val-tRNA(Ile). This Shewanella amazonensis (strain ATCC BAA-1098 / SB2B) protein is Isoleucine--tRNA ligase.